The sequence spans 609 residues: Grainyhead-like protein 1 homolog (609 aa).

Positions 1–91 are transcription activation; sequence MTQDYDNKRP…EHDHADHEHS (91 aa). A disordered region spans residues 183 to 207; it reads SDHFTSNNQPPNSQRRTPDSTFSET. Polar residues predominate over residues 185–206; the sequence is HFTSNNQPPNSQRRTPDSTFSE. One can recognise a Grh/CP2 DB domain in the interval 239–465; sequence AGNNFEYTLE…DLDTQPVLFI (227 aa). 2 interaction with DNA regions span residues 371–380 and 418–421; these read TDFSSQKGVK and RKIR.

It belongs to the grh/CP2 family. Grainyhead subfamily. Binds DNA as homodimer.

It localises to the nucleus. Its function is as follows. Transcription factor involved in epithelial development. Binds directly to the consensus DNA sequence 5'-AACCGGTT-3' and modulates expression of epidermal-specific genes, including XK81A1. Important regulator of DSG1 in the context of epidermal differentiation. Regulates the maintenance of skin barrier. No genetic interaction with GRHL3, nor functional cooperativity due to diverse target gene selectivity during epithelia development. Functions downstream of BMP-signaling cascade modulating endogenous bmp4-responsive targets. The protein is Grainyhead-like protein 1 homolog of Xenopus laevis (African clawed frog).